A 472-amino-acid chain; its full sequence is UDP-glycosyltransferase 708G2 (472 aa).

Histidine 23 serves as the catalytic Proton acceptor. Histidine 23 lines the an anthocyanidin pocket. The active-site Charge relay is aspartate 117. Threonine 140 contributes to the UDP-alpha-D-glucose binding site. The tract at residues 283 to 284 (SR) is UDP. UDP-alpha-D-glucose-binding residues include valine 346, glutamine 348, histidine 363, tryptophan 366, asparagine 367, serine 368, and glutamate 371. An anthocyanidin is bound at residue glycine 386. Positions 387 and 388 each coordinate UDP-alpha-D-glucose.

The protein belongs to the UDP-glycosyltransferase family. Expressed at low levels in leaves, flowers and immature leaves.

It carries out the reaction a 3'-hydro-2'-hydroxy-beta-oxodihydrochalcone + UDP-alpha-D-glucose = a 3'-(beta-D-glucopyranosyl)-2'-hydroxy-beta-oxodihydrochalcone + UDP + H(+). Its function is as follows. UDP-glucose-dependent glucosyltransferase catalyzing the C-glucosylation of 2-hydroxyflavanones (2-hydroxylnaringenin and 2-hydroxypinocembrin) and phloretin. No activity with flavanones, flavones or flavonols. Exhibits C-glucosylation activity toward 2-phenyl-2',4',6'-trihydroxyacetophenone. Can use UDP-xylose as sugar donor, but catalytic efficiency is much lower toward UDP-xylose than toward UDP-glucose. The protein is UDP-glycosyltransferase 708G2 (UGT708G2) of Citrus unshiu (Satsuma mandarin).